The chain runs to 307 residues: Acetyl-coenzyme A carboxylase carboxyl transferase subunit beta (307 aa).

A CoA carboxyltransferase N-terminal domain is found at 28 to 297; the sequence is LWVKCPDTGQ…TPQPGTAPEP (270 aa). A disordered region spans residues 286–307; it reads RRTPQPGTAPEPTTPEPLPNAA. Residues 292–307 are compositionally biased toward pro residues; sequence GTAPEPTTPEPLPNAA.

Belongs to the AccD/PCCB family. As to quaternary structure, acetyl-CoA carboxylase is a heterohexamer composed of biotin carboxyl carrier protein (AccB), biotin carboxylase (AccC) and two subunits each of ACCase subunit alpha (AccA) and ACCase subunit beta (AccD).

It localises to the cytoplasm. The catalysed reaction is N(6)-carboxybiotinyl-L-lysyl-[protein] + acetyl-CoA = N(6)-biotinyl-L-lysyl-[protein] + malonyl-CoA. It participates in lipid metabolism; malonyl-CoA biosynthesis; malonyl-CoA from acetyl-CoA: step 1/1. In terms of biological role, component of the acetyl coenzyme A carboxylase (ACC) complex. Biotin carboxylase (BC) catalyzes the carboxylation of biotin on its carrier protein (BCCP) and then the CO(2) group is transferred by the transcarboxylase to acetyl-CoA to form malonyl-CoA. This is Acetyl-coenzyme A carboxylase carboxyl transferase subunit beta from Methylorubrum extorquens (strain CM4 / NCIMB 13688) (Methylobacterium extorquens).